The following is a 170-amino-acid chain: UPF0201 protein MJ1564 (170 aa).

A compositionally biased stretch (acidic residues) spans 133 to 148 (NEDELEEEEEKEDSEE). The segment at 133–170 (NEDELEEEEEKEDSEEIKEGHKEENNLKIKVIDNSSGD) is disordered. Residues 149-163 (IKEGHKEENNLKIKV) show a composition bias toward basic and acidic residues.

This sequence belongs to the UPF0201 family.

The protein is UPF0201 protein MJ1564 of Methanocaldococcus jannaschii (strain ATCC 43067 / DSM 2661 / JAL-1 / JCM 10045 / NBRC 100440) (Methanococcus jannaschii).